The sequence spans 178 residues: Large ribosomal subunit protein uL5 (178 aa).

The protein belongs to the universal ribosomal protein uL5 family. Part of the 50S ribosomal subunit; contacts the 5S rRNA and probably tRNA. Forms a bridge to the 30S subunit in the 70S ribosome.

This is one of the proteins that bind and probably mediate the attachment of the 5S RNA into the large ribosomal subunit, where it forms part of the central protuberance. In the 70S ribosome it contacts protein S13 of the 30S subunit (bridge B1b), connecting the 2 subunits; this bridge is implicated in subunit movement. May contact the P site tRNA; the 5S rRNA and some of its associated proteins might help stabilize positioning of ribosome-bound tRNAs. The sequence is that of Large ribosomal subunit protein uL5 from Archaeoglobus fulgidus (strain ATCC 49558 / DSM 4304 / JCM 9628 / NBRC 100126 / VC-16).